We begin with the raw amino-acid sequence, 245 residues long: Leucyl/phenylalanyl-tRNA--protein transferase (245 aa).

Belongs to the L/F-transferase family.

Its subcellular location is the cytoplasm. The catalysed reaction is N-terminal L-lysyl-[protein] + L-leucyl-tRNA(Leu) = N-terminal L-leucyl-L-lysyl-[protein] + tRNA(Leu) + H(+). The enzyme catalyses N-terminal L-arginyl-[protein] + L-leucyl-tRNA(Leu) = N-terminal L-leucyl-L-arginyl-[protein] + tRNA(Leu) + H(+). It carries out the reaction L-phenylalanyl-tRNA(Phe) + an N-terminal L-alpha-aminoacyl-[protein] = an N-terminal L-phenylalanyl-L-alpha-aminoacyl-[protein] + tRNA(Phe). Its function is as follows. Functions in the N-end rule pathway of protein degradation where it conjugates Leu, Phe and, less efficiently, Met from aminoacyl-tRNAs to the N-termini of proteins containing an N-terminal arginine or lysine. This Paraburkholderia phytofirmans (strain DSM 17436 / LMG 22146 / PsJN) (Burkholderia phytofirmans) protein is Leucyl/phenylalanyl-tRNA--protein transferase.